Here is a 289-residue protein sequence, read N- to C-terminus: Phosphatidylserine decarboxylase proenzyme (289 aa).

Active-site charge relay system; for autoendoproteolytic cleavage activity residues include D89, H146, and S252. S252 serves as the catalytic Schiff-base intermediate with substrate; via pyruvic acid; for decarboxylase activity. Pyruvic acid (Ser); by autocatalysis is present on S252.

This sequence belongs to the phosphatidylserine decarboxylase family. PSD-B subfamily. Prokaryotic type I sub-subfamily. As to quaternary structure, heterodimer of a large membrane-associated beta subunit and a small pyruvoyl-containing alpha subunit. It depends on pyruvate as a cofactor. Is synthesized initially as an inactive proenzyme. Formation of the active enzyme involves a self-maturation process in which the active site pyruvoyl group is generated from an internal serine residue via an autocatalytic post-translational modification. Two non-identical subunits are generated from the proenzyme in this reaction, and the pyruvate is formed at the N-terminus of the alpha chain, which is derived from the carboxyl end of the proenzyme. The autoendoproteolytic cleavage occurs by a canonical serine protease mechanism, in which the side chain hydroxyl group of the serine supplies its oxygen atom to form the C-terminus of the beta chain, while the remainder of the serine residue undergoes an oxidative deamination to produce ammonia and the pyruvoyl prosthetic group on the alpha chain. During this reaction, the Ser that is part of the protease active site of the proenzyme becomes the pyruvoyl prosthetic group, which constitutes an essential element of the active site of the mature decarboxylase.

Its subcellular location is the cell membrane. It carries out the reaction a 1,2-diacyl-sn-glycero-3-phospho-L-serine + H(+) = a 1,2-diacyl-sn-glycero-3-phosphoethanolamine + CO2. It participates in phospholipid metabolism; phosphatidylethanolamine biosynthesis; phosphatidylethanolamine from CDP-diacylglycerol: step 2/2. Catalyzes the formation of phosphatidylethanolamine (PtdEtn) from phosphatidylserine (PtdSer). The chain is Phosphatidylserine decarboxylase proenzyme from Shewanella sp. (strain W3-18-1).